The sequence spans 174 residues: 3-hydroxyanthranilate 3,4-dioxygenase (174 aa).

Arginine 47 is an O2 binding site. Fe cation-binding residues include histidine 51, glutamate 57, and histidine 95. Glutamate 57 serves as a coordination point for substrate. The substrate site is built by arginine 99 and glutamate 110. The Fe cation site is built by cysteine 125, cysteine 128, cysteine 162, and cysteine 165.

Belongs to the 3-HAO family. Homodimer. Fe(2+) is required as a cofactor.

The catalysed reaction is 3-hydroxyanthranilate + O2 = (2Z,4Z)-2-amino-3-carboxymuconate 6-semialdehyde. It functions in the pathway cofactor biosynthesis; NAD(+) biosynthesis; quinolinate from L-kynurenine: step 3/3. In terms of biological role, catalyzes the oxidative ring opening of 3-hydroxyanthranilate to 2-amino-3-carboxymuconate semialdehyde, which spontaneously cyclizes to quinolinate. This is 3-hydroxyanthranilate 3,4-dioxygenase from Paraburkholderia phytofirmans (strain DSM 17436 / LMG 22146 / PsJN) (Burkholderia phytofirmans).